The chain runs to 356 residues: MRVVVAGGGTAGHIEPALAVAEALRDKHGATVSALGTARGLETTLVPDRGFELHLIEPVPVPRKPNMDLLKLPFRVAKALGQARKALKDTDAQAVIGFGGYVSAPAYMAAKSLGLPFFVHEANARAGMANKLGVKLGGVGLNAVAGSGMEGDVVGIPIRAVLSGARDESAADRARDTWGLDKDRQTIFVTGGSQGSVSINKAVEQAVDQLVEAGFQVLHAVGKKNELPAAKPGYHPVPFIDDMQAAYTVADLIVCRSGAMTVAEVTAAGVPAIYVPLPHGNGEQALNAQAVIKAGAARQIDDADFTAQTLIDATLDILLHPSTHQSMSDAAKTSTAGNASTVIADMIAATIKSQHN.

UDP-N-acetyl-alpha-D-glucosamine-binding positions include 10 to 12 (TAG), asparagine 123, arginine 159, serine 193, isoleucine 240, and glutamine 284.

The protein belongs to the glycosyltransferase 28 family. MurG subfamily.

It is found in the cell membrane. The catalysed reaction is di-trans,octa-cis-undecaprenyl diphospho-N-acetyl-alpha-D-muramoyl-L-alanyl-D-glutamyl-meso-2,6-diaminopimeloyl-D-alanyl-D-alanine + UDP-N-acetyl-alpha-D-glucosamine = di-trans,octa-cis-undecaprenyl diphospho-[N-acetyl-alpha-D-glucosaminyl-(1-&gt;4)]-N-acetyl-alpha-D-muramoyl-L-alanyl-D-glutamyl-meso-2,6-diaminopimeloyl-D-alanyl-D-alanine + UDP + H(+). It functions in the pathway cell wall biogenesis; peptidoglycan biosynthesis. Cell wall formation. Catalyzes the transfer of a GlcNAc subunit on undecaprenyl-pyrophosphoryl-MurNAc-pentapeptide (lipid intermediate I) to form undecaprenyl-pyrophosphoryl-MurNAc-(pentapeptide)GlcNAc (lipid intermediate II). The protein is UDP-N-acetylglucosamine--N-acetylmuramyl-(pentapeptide) pyrophosphoryl-undecaprenol N-acetylglucosamine transferase of Corynebacterium glutamicum (strain R).